An 87-amino-acid chain; its full sequence is Small ribosomal subunit protein uS17 (87 aa).

This sequence belongs to the universal ribosomal protein uS17 family. In terms of assembly, part of the 30S ribosomal subunit.

One of the primary rRNA binding proteins, it binds specifically to the 5'-end of 16S ribosomal RNA. The sequence is that of Small ribosomal subunit protein uS17 from Pelotomaculum thermopropionicum (strain DSM 13744 / JCM 10971 / SI).